Here is a 215-residue protein sequence, read N- to C-terminus: Guanylate kinase (215 aa).

Residues 9–187 (GTLYIVSAPS…ALDELSCLVH (179 aa)) enclose the Guanylate kinase-like domain. ATP is bound at residue 16-23 (APSGAGKT).

Belongs to the guanylate kinase family.

The protein resides in the cytoplasm. It catalyses the reaction GMP + ATP = GDP + ADP. Functionally, essential for recycling GMP and indirectly, cGMP. In Chromohalobacter salexigens (strain ATCC BAA-138 / DSM 3043 / CIP 106854 / NCIMB 13768 / 1H11), this protein is Guanylate kinase.